Here is a 428-residue protein sequence, read N- to C-terminus: Adenylosuccinate synthetase (428 aa).

Residues 12–18 (GDEGKGK) and 40–42 (GHT) contribute to the GTP site. The active-site Proton acceptor is the D13. Residues D13 and G40 each coordinate Mg(2+). Residues 13–16 (DEGK), 38–41 (NAGH), T129, R143, Q224, T239, and R303 each bind IMP. The active-site Proton donor is H41. Substrate is bound at residue 299–305 (VTTGRSR). Residues R305, 331-333 (KLD), and 413-415 (GVG) contribute to the GTP site.

Belongs to the adenylosuccinate synthetase family. Homodimer. The cofactor is Mg(2+).

It localises to the cytoplasm. The catalysed reaction is IMP + L-aspartate + GTP = N(6)-(1,2-dicarboxyethyl)-AMP + GDP + phosphate + 2 H(+). The protein operates within purine metabolism; AMP biosynthesis via de novo pathway; AMP from IMP: step 1/2. Functionally, plays an important role in the de novo pathway of purine nucleotide biosynthesis. Catalyzes the first committed step in the biosynthesis of AMP from IMP. The protein is Adenylosuccinate synthetase of Saccharopolyspora erythraea (strain ATCC 11635 / DSM 40517 / JCM 4748 / NBRC 13426 / NCIMB 8594 / NRRL 2338).